We begin with the raw amino-acid sequence, 702 residues long: Putative methyltransferase NSUN7 (702 aa).

Cys424 (nucleophile) is an active-site residue. Disordered stretches follow at residues 522 to 541, 567 to 593, and 675 to 702; these read KSSKREKKKKKSKTSLTKAA, ETVTKPSLPQKNTAQVGASSQTRKHKL, and PTPSLSRKGEKPKDDTRSSLLRPPRRWL. Basic residues predominate over residues 523–534; the sequence is SSKREKKKKKSK. Residues 567-587 show a composition bias toward polar residues; that stretch reads ETVTKPSLPQKNTAQVGASSQ. Residues 681–691 show a composition bias toward basic and acidic residues; that stretch reads RKGEKPKDDTR.

Belongs to the class I-like SAM-binding methyltransferase superfamily. RsmB/NOP family.

In terms of biological role, may have S-adenosyl-L-methionine-dependent methyl-transferase activity. The chain is Putative methyltransferase NSUN7 (NSUN7) from Macaca fascicularis (Crab-eating macaque).